A 331-amino-acid polypeptide reads, in one-letter code: Zinc finger protein 660 (331 aa).

Residues Met-1–Thr-12 are compositionally biased toward basic residues. Residues Met-1–Cys-35 form a disordered region. Ser-23 is subject to Phosphoserine. C2H2-type zinc fingers lie at residues Tyr-50 to His-72, Tyr-78 to His-100, Tyr-106 to His-128, Tyr-134 to His-156, Tyr-162 to His-184, Tyr-190 to His-212, Tyr-218 to His-240, Tyr-246 to His-268, Tyr-274 to His-296, and Tyr-302 to His-324.

It belongs to the krueppel C2H2-type zinc-finger protein family.

The protein localises to the nucleus. Functionally, may be involved in transcriptional regulation. This is Zinc finger protein 660 (ZNF660) from Homo sapiens (Human).